Reading from the N-terminus, the 143-residue chain is Large ribosomal subunit protein uL15 (143 aa).

Residues 1 to 51 form a disordered region; sequence MELNTIKPASGAKHAKRRVGRGIGSGLGKTAGRGHKGQKSRAGGYHKVGFE. Positions 21–31 are enriched in gly residues; sequence RGIGSGLGKTA.

The protein belongs to the universal ribosomal protein uL15 family. As to quaternary structure, part of the 50S ribosomal subunit.

In terms of biological role, binds to the 23S rRNA. In Methylibium petroleiphilum (strain ATCC BAA-1232 / LMG 22953 / PM1), this protein is Large ribosomal subunit protein uL15.